Here is a 374-residue protein sequence, read N- to C-terminus: Queuine tRNA-ribosyltransferase (374 aa).

Asp-92 serves as the catalytic Proton acceptor. Residues 92-96 (DSGGY), Asp-146, Gln-193, and Gly-220 each bind substrate. Residues 251 to 257 (GVGKPDD) are RNA binding. The active-site Nucleophile is the Asp-270. Positions 275 to 279 (TRSGR) are RNA binding; important for wobble base 34 recognition. Cys-308, Cys-310, Cys-313, and His-339 together coordinate Zn(2+).

It belongs to the queuine tRNA-ribosyltransferase family. Homodimer. Within each dimer, one monomer is responsible for RNA recognition and catalysis, while the other monomer binds to the replacement base PreQ1. Zn(2+) serves as cofactor.

The catalysed reaction is 7-aminomethyl-7-carbaguanine + guanosine(34) in tRNA = 7-aminomethyl-7-carbaguanosine(34) in tRNA + guanine. The protein operates within tRNA modification; tRNA-queuosine biosynthesis. Its function is as follows. Catalyzes the base-exchange of a guanine (G) residue with the queuine precursor 7-aminomethyl-7-deazaguanine (PreQ1) at position 34 (anticodon wobble position) in tRNAs with GU(N) anticodons (tRNA-Asp, -Asn, -His and -Tyr). Catalysis occurs through a double-displacement mechanism. The nucleophile active site attacks the C1' of nucleotide 34 to detach the guanine base from the RNA, forming a covalent enzyme-RNA intermediate. The proton acceptor active site deprotonates the incoming PreQ1, allowing a nucleophilic attack on the C1' of the ribose to form the product. After dissociation, two additional enzymatic reactions on the tRNA convert PreQ1 to queuine (Q), resulting in the hypermodified nucleoside queuosine (7-(((4,5-cis-dihydroxy-2-cyclopenten-1-yl)amino)methyl)-7-deazaguanosine). This is Queuine tRNA-ribosyltransferase from Novosphingobium aromaticivorans (strain ATCC 700278 / DSM 12444 / CCUG 56034 / CIP 105152 / NBRC 16084 / F199).